The following is a 555-amino-acid chain: Formate--tetrahydrofolate ligase (555 aa).

65-72 contributes to the ATP binding site; sequence TPAGEGKS.

It belongs to the formate--tetrahydrofolate ligase family.

The catalysed reaction is (6S)-5,6,7,8-tetrahydrofolate + formate + ATP = (6R)-10-formyltetrahydrofolate + ADP + phosphate. It functions in the pathway one-carbon metabolism; tetrahydrofolate interconversion. This chain is Formate--tetrahydrofolate ligase, found in Staphylococcus haemolyticus (strain JCSC1435).